The following is a 227-amino-acid chain: Cytochrome c oxidase subunit 2 (227 aa).

Topologically, residues 1 to 14 (MAYTFQLGLQDATS) are mitochondrial intermembrane. The helical transmembrane segment at 15-45 (PIMEELTNFHDHTLMIVFLISSLVLYVISLM) threads the bilayer. Residues 46 to 59 (LTTKLTHTNTMDAQ) lie on the Mitochondrial matrix side of the membrane. A helical membrane pass occupies residues 60 to 87 (EVETIWTILPAVILILIALPSLRILYMM). Residues 88–227 (DEINNPVLTV…HFENWSASMI (140 aa)) lie on the Mitochondrial intermembrane side of the membrane. The Cu cation site is built by His161, Cys196, Glu198, Cys200, His204, and Met207. Mg(2+) is bound at residue Glu198.

The protein belongs to the cytochrome c oxidase subunit 2 family. In terms of assembly, component of the cytochrome c oxidase (complex IV, CIV), a multisubunit enzyme composed of 14 subunits. The complex is composed of a catalytic core of 3 subunits MT-CO1, MT-CO2 and MT-CO3, encoded in the mitochondrial DNA, and 11 supernumerary subunits COX4I, COX5A, COX5B, COX6A, COX6B, COX6C, COX7A, COX7B, COX7C, COX8 and NDUFA4, which are encoded in the nuclear genome. The complex exists as a monomer or a dimer and forms supercomplexes (SCs) in the inner mitochondrial membrane with NADH-ubiquinone oxidoreductase (complex I, CI) and ubiquinol-cytochrome c oxidoreductase (cytochrome b-c1 complex, complex III, CIII), resulting in different assemblies (supercomplex SCI(1)III(2)IV(1) and megacomplex MCI(2)III(2)IV(2)). Found in a complex with TMEM177, COA6, COX18, COX20, SCO1 and SCO2. Interacts with TMEM177 in a COX20-dependent manner. Interacts with COX20. Interacts with COX16. It depends on Cu cation as a cofactor.

The protein resides in the mitochondrion inner membrane. It catalyses the reaction 4 Fe(II)-[cytochrome c] + O2 + 8 H(+)(in) = 4 Fe(III)-[cytochrome c] + 2 H2O + 4 H(+)(out). In terms of biological role, component of the cytochrome c oxidase, the last enzyme in the mitochondrial electron transport chain which drives oxidative phosphorylation. The respiratory chain contains 3 multisubunit complexes succinate dehydrogenase (complex II, CII), ubiquinol-cytochrome c oxidoreductase (cytochrome b-c1 complex, complex III, CIII) and cytochrome c oxidase (complex IV, CIV), that cooperate to transfer electrons derived from NADH and succinate to molecular oxygen, creating an electrochemical gradient over the inner membrane that drives transmembrane transport and the ATP synthase. Cytochrome c oxidase is the component of the respiratory chain that catalyzes the reduction of oxygen to water. Electrons originating from reduced cytochrome c in the intermembrane space (IMS) are transferred via the dinuclear copper A center (CU(A)) of subunit 2 and heme A of subunit 1 to the active site in subunit 1, a binuclear center (BNC) formed by heme A3 and copper B (CU(B)). The BNC reduces molecular oxygen to 2 water molecules using 4 electrons from cytochrome c in the IMS and 4 protons from the mitochondrial matrix. This Niviventer culturatus (Oldfield white-bellied rat) protein is Cytochrome c oxidase subunit 2 (MT-CO2).